The following is a 559-amino-acid chain: Neutral amino acid transporter 9 (559 aa).

The Cytoplasmic portion of the chain corresponds to Met-1–Ser-118. Residues Leu-119 to Trp-139 traverse the membrane as a helical segment. The segment at Thr-128–Ser-133 is important for arginine binding and amino acid transport. Arginine is bound at residue Ser-133. The Lumenal segment spans residues Gly-140 to Gly-145. The helical transmembrane segment at Phe-146–Arg-166 threads the bilayer. The Cytoplasmic portion of the chain corresponds to Val-167–Gln-197. A helical membrane pass occupies residues Trp-198–Phe-224. At Asn-225 to Arg-281 the chain is on the lumenal side. Residues Asn-238, Asn-247, and Asn-264 are each glycosylated (N-linked (GlcNAc...) asparagine). Cys-254 and Cys-422 are oxidised to a cystine. The helical transmembrane segment at Trp-282–Leu-298 threads the bilayer. Over Pro-299–Ser-307 the chain is Cytoplasmic. The helical transmembrane segment at Phe-308–Ile-332 threads the bilayer. Over Arg-333 to Arg-354 the chain is Lumenal. A helical membrane pass occupies residues Ala-355 to Ile-375. Residues Thr-376–Cys-392 lie on the Cytoplasmic side of the membrane. Residues Ile-393–Phe-413 traverse the membrane as a helical segment. Residues Pro-414 to Asp-435 are Lumenal-facing. The helical transmembrane segment at Thr-436–Leu-456 threads the bilayer. The short motif at Arg-442 to Val-452 is the CARC motif element. The CRAC motif motif lies at Leu-455 to Arg-461. Residues Gly-457 to Phe-477 are Cytoplasmic-facing. A helical membrane pass occupies residues His-478–Pro-498. Residues Asn-499–Arg-505 are Lumenal-facing. A helical transmembrane segment spans residues Tyr-506 to Leu-526. The Cytoplasmic portion of the chain corresponds to Ser-527–Lys-538. A helical membrane pass occupies residues Leu-539–Met-559.

Belongs to the amino acid/polyamine transporter 2 family. SLC38A9 subfamily. In terms of assembly, associated component of the Ragulator complex (composed of LAMTOR1, LAMTOR2, LAMTOR3, LAMTOR4 and LAMTOR5). Associated component of the Rag GTPases heterodimers (composed of RRAGA, RRAGB, RRAGC and RRAGD); this interaction is independent of the Ragulator complex but depends on the nucleotide loading state of the Rag GTPase heterodimer. Interacts with TM4SF5. Interacts with NPC1; this interaction inhibits cholesterol-mediated mTORC1 activation via its sterol transport activity. Glycosylated.

It localises to the lysosome membrane. The protein resides in the late endosome membrane. The enzyme catalyses L-leucine(in) = L-leucine(out). It carries out the reaction L-tyrosine(in) = L-tyrosine(out). It catalyses the reaction L-glutamine(out) = L-glutamine(in). The catalysed reaction is L-asparagine(out) = L-asparagine(in). Functionally, lysosomal amino acid transporter involved in the activation of mTORC1 in response to amino acid levels. Probably acts as an amino acid sensor of the Rag GTPases and Ragulator complexes, 2 complexes involved in amino acid sensing and activation of mTORC1, a signaling complex promoting cell growth in response to growth factors, energy levels, and amino acids. Following activation by amino acids, the Ragulator and Rag GTPases function as a scaffold recruiting mTORC1 to lysosomes where it is in turn activated. SLC38A9 mediates transport of amino acids with low capacity and specificity with a slight preference for polar amino acids. Acts as an arginine sensor. Following activation by arginine binding, mediates transport of L-glutamine, leucine and tyrosine with high efficiency, and is required for the efficient utilization of these amino acids after lysosomal protein degradation. However, the transport mechanism is not well defined and the role of sodium is not clear. Can disassemble the lysosomal folliculin complex (LFC), and thereby triggers GAP activity of FLCN:FNIP2 toward RRAGC. Acts as an cholesterol sensor that conveys increases in lysosomal cholesterol, leading to lysosomal recruitment and activation of mTORC1 via the Rag GTPases. Guanine exchange factor (GEF) that, upon arginine binding, stimulates GDP release from RRAGA and therefore activates the Rag GTPase heterodimer and the mTORC1 pathway in response to nutrient sufficiency. This is Neutral amino acid transporter 9 from Rattus norvegicus (Rat).